The primary structure comprises 601 residues: NADPH--cytochrome P450 reductase (601 aa).

The Flavodoxin-like domain maps to 25–169 (IVVFYGSQTG…DFVTWREQFW (145 aa)). Residues 31–36 (SQTGTG), 83–86 (ATYG), 118–127 (LGDKTYEHYN), and aspartate 153 contribute to the FMN site. Residues 224–425 (KNPFLAPVTV…ICAVLVEYXT (202 aa)) enclose the FAD-binding FR-type domain. FAD is bound by residues 399 to 402 (RYYS), 417 to 419 (CAV), tyrosine 423, and 427 to 430 (GVAT). Residues threonine 458, 519–520 (SR), 525–529 (KVYVQ), and aspartate 562 contribute to the NADP(+) site. Residue tryptophan 600 participates in FAD binding.

This sequence belongs to the NADPH--cytochrome P450 reductase family. The protein in the N-terminal section; belongs to the flavodoxin family. In the C-terminal section; belongs to the flavoprotein pyridine nucleotide cytochrome reductase family. FAD serves as cofactor. It depends on FMN as a cofactor.

The protein resides in the endoplasmic reticulum membrane. The catalysed reaction is 2 oxidized [cytochrome P450] + NADPH = 2 reduced [cytochrome P450] + NADP(+) + H(+). In terms of biological role, this enzyme is required for electron transfer from NADP to cytochrome P450 in microsomes. It can also provide electron transfer to heme oxygenase and cytochrome B5. This chain is NADPH--cytochrome P450 reductase, found in Salmo trutta (Brown trout).